Consider the following 794-residue polypeptide: uncharacterized protein (794 aa).

The N-terminal stretch at 1 to 22 is a signal peptide; it reads MKFKYGAIVFSGLLGVSAILAA. Residue cysteine 23 is the site of N-palmitoyl cysteine attachment. Residue cysteine 23 is the site of S-diacylglycerol cysteine attachment. 2 stretches are compositionally biased toward polar residues: residues 182–200 and 245–261; these read TSVQRTADSGSGTTNNNGV and QMSTQTQPTDNSNDANQ. Disordered regions lie at residues 182 to 208, 222 to 261, 474 to 529, 566 to 594, and 737 to 757; these read TSVQRTADSGSGTTNNNGVTKPLKIDK, NKAKENGKKTSSSRRKRNLSSSKQMSTQTQPTDNSNDANQ, FKIK…GKNG, SAAKKEDKKSGESTTEQTQIQSKSVTEQK, and KNEKKEGSDQKDSKSNGRGKQ. Low complexity predominate over residues 475–501; the sequence is KIKSSNKSKSSSSKSSTKAETGKTSGG. Over residues 511-526 the composition is skewed to polar residues; sequence GAQNQGKKGEGAQNQG. A compositionally biased stretch (basic and acidic residues) spans 567–576; it reads AAKKEDKKSG. Positions 577–593 are enriched in polar residues; sequence ESTTEQTQIQSKSVTEQ. The segment covering 737–751 has biased composition (basic and acidic residues); sequence KNEKKEGSDQKDSKS.

This sequence belongs to the MG185/MG260 family.

It localises to the cell membrane. This is an uncharacterized protein from Mycoplasma pneumoniae (strain ATCC 29342 / M129 / Subtype 1) (Mycoplasmoides pneumoniae).